The primary structure comprises 348 residues: Probable dual-specificity RNA methyltransferase RlmN (348 aa).

Glutamate 89 acts as the Proton acceptor in catalysis. In terms of domain architecture, Radical SAM core spans 95-328 (HKNRNTVCVS…VTLRISYGSK (234 aa)). A disulfide bridge links cysteine 102 with cysteine 333. The [4Fe-4S] cluster site is built by cysteine 109, cysteine 113, and cysteine 116. Residues 159–160 (GE), serine 191, 214–216 (SLH), and asparagine 290 each bind S-adenosyl-L-methionine. Residue cysteine 333 is the S-methylcysteine intermediate of the active site.

It belongs to the radical SAM superfamily. RlmN family. It depends on [4Fe-4S] cluster as a cofactor.

The protein resides in the cytoplasm. It carries out the reaction adenosine(2503) in 23S rRNA + 2 reduced [2Fe-2S]-[ferredoxin] + 2 S-adenosyl-L-methionine = 2-methyladenosine(2503) in 23S rRNA + 5'-deoxyadenosine + L-methionine + 2 oxidized [2Fe-2S]-[ferredoxin] + S-adenosyl-L-homocysteine. The catalysed reaction is adenosine(37) in tRNA + 2 reduced [2Fe-2S]-[ferredoxin] + 2 S-adenosyl-L-methionine = 2-methyladenosine(37) in tRNA + 5'-deoxyadenosine + L-methionine + 2 oxidized [2Fe-2S]-[ferredoxin] + S-adenosyl-L-homocysteine. Functionally, specifically methylates position 2 of adenine 2503 in 23S rRNA and position 2 of adenine 37 in tRNAs. This chain is Probable dual-specificity RNA methyltransferase RlmN, found in Dictyoglomus turgidum (strain DSM 6724 / Z-1310).